Consider the following 342-residue polypeptide: Elongation factor Ts (342 aa).

Residues 80–83 are involved in Mg(2+) ion dislocation from EF-Tu; the sequence is TDFV.

Belongs to the EF-Ts family.

Its subcellular location is the cytoplasm. Functionally, associates with the EF-Tu.GDP complex and induces the exchange of GDP to GTP. It remains bound to the aminoacyl-tRNA.EF-Tu.GTP complex up to the GTP hydrolysis stage on the ribosome. This Lactobacillus delbrueckii subsp. bulgaricus (strain ATCC 11842 / DSM 20081 / BCRC 10696 / JCM 1002 / NBRC 13953 / NCIMB 11778 / NCTC 12712 / WDCM 00102 / Lb 14) protein is Elongation factor Ts.